The following is a 214-amino-acid chain: MKKAEPRVIRLLMELRRMGVVDTRVLSAIERIPRALFVAEPFLDQAYENTALPIGCAQTISQPLVVGLMSQALEVGERMKVLEIGTGSGYQAAVLAKLCRRLYSVERHKPLLAEAEARFKHLRLHNITCRAADGSRGWPEQAPFDRIMVTAAAPDIPPALVDQLKPDGIMVLPLGDVGGIDQELVRITKTDRGIDIQPFLPVRFVPLVEGIPEE.

S61 is a catalytic residue.

This sequence belongs to the methyltransferase superfamily. L-isoaspartyl/D-aspartyl protein methyltransferase family.

The protein resides in the cytoplasm. The catalysed reaction is [protein]-L-isoaspartate + S-adenosyl-L-methionine = [protein]-L-isoaspartate alpha-methyl ester + S-adenosyl-L-homocysteine. In terms of biological role, catalyzes the methyl esterification of L-isoaspartyl residues in peptides and proteins that result from spontaneous decomposition of normal L-aspartyl and L-asparaginyl residues. It plays a role in the repair and/or degradation of damaged proteins. The protein is Protein-L-isoaspartate O-methyltransferase of Paramagnetospirillum magneticum (strain ATCC 700264 / AMB-1) (Magnetospirillum magneticum).